An 83-amino-acid chain; its full sequence is Putative membrane protein insertion efficiency factor (83 aa).

This sequence belongs to the UPF0161 family.

The protein localises to the cell membrane. Its function is as follows. Could be involved in insertion of integral membrane proteins into the membrane. In Staphylococcus saprophyticus subsp. saprophyticus (strain ATCC 15305 / DSM 20229 / NCIMB 8711 / NCTC 7292 / S-41), this protein is Putative membrane protein insertion efficiency factor.